The chain runs to 203 residues: Imidazoleglycerol-phosphate dehydratase (203 aa).

Residues 184 to 203 (DPRRSSQIPSSKGVLEQAGQ) are disordered.

It belongs to the imidazoleglycerol-phosphate dehydratase family.

It is found in the cytoplasm. It carries out the reaction D-erythro-1-(imidazol-4-yl)glycerol 3-phosphate = 3-(imidazol-4-yl)-2-oxopropyl phosphate + H2O. It participates in amino-acid biosynthesis; L-histidine biosynthesis; L-histidine from 5-phospho-alpha-D-ribose 1-diphosphate: step 6/9. In Prochlorococcus marinus (strain NATL1A), this protein is Imidazoleglycerol-phosphate dehydratase.